The chain runs to 156 residues: Transcriptional repressor NrdR (156 aa).

A zinc finger lies at 3–34 (CPKCNSTHSRVVDSRHADEVNAIRRRRECEEC). Positions 49–139 (LIVVKKDGTR…VYKEFKDVDQ (91 aa)) constitute an ATP-cone domain.

Belongs to the NrdR family. Zn(2+) serves as cofactor.

Functionally, negatively regulates transcription of bacterial ribonucleotide reductase nrd genes and operons by binding to NrdR-boxes. This is Transcriptional repressor NrdR from Staphylococcus saprophyticus subsp. saprophyticus (strain ATCC 15305 / DSM 20229 / NCIMB 8711 / NCTC 7292 / S-41).